We begin with the raw amino-acid sequence, 417 residues long: Serine hydroxymethyltransferase (417 aa).

Residues Leu-121 and 125–127 (GHL) contribute to the (6S)-5,6,7,8-tetrahydrofolate site. Lys-229 is modified (N6-(pyridoxal phosphate)lysine). Position 355–357 (355–357 (SPF)) interacts with (6S)-5,6,7,8-tetrahydrofolate.

This sequence belongs to the SHMT family. In terms of assembly, homodimer. Pyridoxal 5'-phosphate is required as a cofactor.

It is found in the cytoplasm. It carries out the reaction (6R)-5,10-methylene-5,6,7,8-tetrahydrofolate + glycine + H2O = (6S)-5,6,7,8-tetrahydrofolate + L-serine. It functions in the pathway one-carbon metabolism; tetrahydrofolate interconversion. Its pathway is amino-acid biosynthesis; glycine biosynthesis; glycine from L-serine: step 1/1. In terms of biological role, catalyzes the reversible interconversion of serine and glycine with tetrahydrofolate (THF) serving as the one-carbon carrier. This reaction serves as the major source of one-carbon groups required for the biosynthesis of purines, thymidylate, methionine, and other important biomolecules. Also exhibits THF-independent aldolase activity toward beta-hydroxyamino acids, producing glycine and aldehydes, via a retro-aldol mechanism. The chain is Serine hydroxymethyltransferase from Xanthomonas axonopodis pv. citri (strain 306).